The following is a 337-amino-acid chain: Ornithine carbamoyltransferase (337 aa).

Carbamoyl phosphate-binding positions include 57-60 (STRT), glutamine 84, arginine 108, and 135-138 (HPTQ). Residues asparagine 167, aspartate 231, and 235–236 (SM) each bind L-ornithine. Residues 272-273 (CL) and arginine 317 contribute to the carbamoyl phosphate site.

It belongs to the aspartate/ornithine carbamoyltransferase superfamily. OTCase family.

It is found in the cytoplasm. It carries out the reaction carbamoyl phosphate + L-ornithine = L-citrulline + phosphate + H(+). It participates in amino-acid degradation; L-arginine degradation via ADI pathway; carbamoyl phosphate from L-arginine: step 2/2. Functionally, reversibly catalyzes the transfer of the carbamoyl group from carbamoyl phosphate (CP) to the N(epsilon) atom of ornithine (ORN) to produce L-citrulline. This Streptococcus equi subsp. equi (strain 4047) protein is Ornithine carbamoyltransferase.